Here is a 122-residue protein sequence, read N- to C-terminus: Small ribosomal subunit protein uS13 (122 aa).

A disordered region spans residues 93 to 122; it reads RRGLPVRGQRTKTNARTRKGPKKTVAGKKK.

This sequence belongs to the universal ribosomal protein uS13 family. Part of the 30S ribosomal subunit. Forms a loose heterodimer with protein S19. Forms two bridges to the 50S subunit in the 70S ribosome.

Located at the top of the head of the 30S subunit, it contacts several helices of the 16S rRNA. In the 70S ribosome it contacts the 23S rRNA (bridge B1a) and protein L5 of the 50S subunit (bridge B1b), connecting the 2 subunits; these bridges are implicated in subunit movement. Contacts the tRNAs in the A and P-sites. The protein is Small ribosomal subunit protein uS13 of Micrococcus luteus (strain ATCC 4698 / DSM 20030 / JCM 1464 / CCM 169 / CCUG 5858 / IAM 1056 / NBRC 3333 / NCIMB 9278 / NCTC 2665 / VKM Ac-2230) (Micrococcus lysodeikticus).